The following is a 514-amino-acid chain: Na(+)/H(+) antiporter NhaB (514 aa).

12 helical membrane passes run 23-43, 52-72, 97-117, 120-140, 144-164, 202-222, 238-258, 303-323, 357-377, 391-411, 447-467, and 475-495; these read LALL…SFVA, IFTL…LLAI, LLLM…LFIF, LLLS…AAAF, FLDA…FYGI, LMMH…VGEP, FFLR…LTCM, AIIG…VGLI, LTVF…APII, LFYL…VGTI, ATPN…APLI, and VWMA…CVEF.

The protein belongs to the NhaB Na(+)/H(+) (TC 2.A.34) antiporter family.

It is found in the cell inner membrane. The catalysed reaction is 2 Na(+)(in) + 3 H(+)(out) = 2 Na(+)(out) + 3 H(+)(in). In terms of biological role, na(+)/H(+) antiporter that extrudes sodium in exchange for external protons. The sequence is that of Na(+)/H(+) antiporter NhaB from Salmonella arizonae (strain ATCC BAA-731 / CDC346-86 / RSK2980).